The primary structure comprises 147 residues: Arginine repressor (147 aa).

Belongs to the ArgR family.

It is found in the cytoplasm. It functions in the pathway amino-acid biosynthesis; L-arginine biosynthesis [regulation]. Regulates arginine biosynthesis genes. The protein is Arginine repressor of Chlamydia caviae (strain ATCC VR-813 / DSM 19441 / 03DC25 / GPIC) (Chlamydophila caviae).